A 186-amino-acid polypeptide reads, in one-letter code: Peptide deformylase (186 aa).

Residues Cys99 and His141 each contribute to the Fe cation site. Glu142 is a catalytic residue. Position 145 (His145) interacts with Fe cation.

The protein belongs to the polypeptide deformylase family. Fe(2+) serves as cofactor.

It carries out the reaction N-terminal N-formyl-L-methionyl-[peptide] + H2O = N-terminal L-methionyl-[peptide] + formate. Its function is as follows. Removes the formyl group from the N-terminal Met of newly synthesized proteins. Requires at least a dipeptide for an efficient rate of reaction. N-terminal L-methionine is a prerequisite for activity but the enzyme has broad specificity at other positions. This is Peptide deformylase from Chlamydia caviae (strain ATCC VR-813 / DSM 19441 / 03DC25 / GPIC) (Chlamydophila caviae).